Consider the following 538-residue polypeptide: Nicotinate phosphoribosyltransferase (538 aa).

The nicotinate site is built by tyrosine 21 and threonine 210. Histidine 213 bears the Phosphohistidine mark. Arginine 318 is a nicotinate binding site. A 5-phospho-alpha-D-ribose 1-diphosphate-binding site is contributed by threonine 380.

This sequence belongs to the NAPRTase family. Homodimer. It depends on Mg(2+) as a cofactor. Mn(2+) serves as cofactor. Post-translationally, transiently phosphorylated on a His residue during the reaction cycle. Phosphorylation strongly increases the affinity for substrates and increases the rate of nicotinate D-ribonucleotide production. Dephosphorylation regenerates the low-affinity form of the enzyme, leading to product release.

It localises to the cytoplasm. The protein resides in the cytosol. The enzyme catalyses nicotinate + 5-phospho-alpha-D-ribose 1-diphosphate + ATP + H2O = nicotinate beta-D-ribonucleotide + ADP + phosphate + diphosphate. Its pathway is cofactor biosynthesis; NAD(+) biosynthesis; nicotinate D-ribonucleotide from nicotinate: step 1/1. Its function is as follows. Catalyzes the first step in the biosynthesis of NAD from nicotinic acid, the ATP-dependent synthesis of beta-nicotinate D-ribonucleotide from nicotinate and 5-phospho-D-ribose 1-phosphate. Helps prevent cellular oxidative stress via its role in NAD biosynthesis. In Rattus norvegicus (Rat), this protein is Nicotinate phosphoribosyltransferase (Naprt).